The primary structure comprises 271 residues: Ribosome-recycling factor, chloroplastic (271 aa).

A chloroplast-targeting transit peptide spans 1–78 (MAASSLSSAT…LQNRAGTFRC (78 aa)). The stretch at 213–260 (AVRNIRRDALKSYEKLEKEKKLSEDNVKDLSADLQKLTDEYMKKVESI) forms a coiled coil.

It belongs to the RRF family. In terms of assembly, modeling onto the 70S ribosome suggests it binds to PSRP1. As to expression, restricted to photosynthetic tissues.

Its subcellular location is the plastid. It is found in the chloroplast stroma. Functionally, responsible for the release of ribosomes from messenger RNA at the termination of chloroplastic protein biosynthesis. This is Ribosome-recycling factor, chloroplastic (RRF) from Spinacia oleracea (Spinach).